A 780-amino-acid polypeptide reads, in one-letter code: MTHEEHHAAKTLGIGKAIAVLTSGGDAQGMNAAVRAVVRVGIFTGARVFFVHEGYQGLVDGGDHIREATWESVSMMLQLGGTVIGSARCKDFREREGRLRAAHNLVKLGITNLCVIGGDGSLTGADTFRSEWSDLLSDLQKAGKITAEEATKSNYLNIVGLVGSIDNDFCGTDMTIGTDSALHRIIEIVDAITTTAQSHQRTFVLEVMGRHCGYLALVTSLSCGADWVFIPECPPDDDWEDHLCRRLSETRTRGSRLNIIIVAEGAIDRNGKPITSESIKDLVVKRLGYDTRVTVLGHVQRGGTPSAFDRILGSRMGVEAVMALLEATPDTPACVVSLSGNQAVRLPLMECVQVTKDVTKAMAERKFDEAMKLRGRSFMNNWEVYKLLAHIRPPVSKSGSHTVAVMNVGAPAAGMNAAVRSTVRIGLIQGNRVLVVHDGFEGLAKGRIEEAGWSYVGGWTGQGGSKLGTKRTLPRKSFEQISANITKFNIQGLIIVGGFEAYTGGLELMEGRKQYDELCIPFVVIPATVSNNVPGSDFSVGADTALNTICMTCDRIKQSAAGTKRRVFIIETMGGYCGYLATMAGLAAGADAAYIFEEPFTIRDLQVNVEHLVQKMKTTVKRGLVLRNEKCNENYSTDFIFNLYSEEGKGIFDSRKNVLGHMQQGGSPTPFDRNFATKMGAKAMNWMSGKIKESYRNGRIFANTPDSGCVLGMRKRALVFQPVTELKEQTDFEHRIPKEQWWLKLRPILKILAKYEIDLDTSEHAHLEHISRKRSGEAPA.

At threonine 2 the chain carries N-acetylthreonine. Positions 2–390 (THEEHHAAKT…NWEVYKLLAH (389 aa)) are N-terminal catalytic PFK domain 1. ATP contacts are provided by residues glycine 25, 88–89 (RC), and 118–121 (GDGS). Residue aspartate 119 participates in Mg(2+) binding. Serine 133 bears the Phosphoserine mark. Substrate-binding positions include 164 to 166 (SID), arginine 201, 208 to 210 (MGR), glutamate 264, arginine 292, and 298 to 301 (HVQR). Aspartate 166 functions as the Proton acceptor in the catalytic mechanism. Serine 377 carries the phosphoserine modification. The interdomain linker stretch occupies residues 391–401 (IRPPVSKSGSH). A C-terminal regulatory PFK domain 2 region spans residues 402–780 (TVAVMNVGAP…SRKRSGEAPA (379 aa)). Beta-D-fructose 2,6-bisphosphate contacts are provided by residues arginine 471 and 528–532 (TVSNN). Serine 530 carries O-linked (GlcNAc) serine glycosylation. Lysine 557 bears the N6-(2-hydroxyisobutyryl)lysine mark. Residues arginine 566, 573-575 (MGG), glutamate 629, arginine 655, and 661-664 (HMQQ) contribute to the beta-D-fructose 2,6-bisphosphate site. Serine 667 carries the phosphoserine modification. Residue arginine 735 coordinates beta-D-fructose 2,6-bisphosphate. Phosphoserine is present on serine 775.

The protein belongs to the phosphofructokinase type A (PFKA) family. ATP-dependent PFK group I subfamily. Eukaryotic two domain clade 'E' sub-subfamily. In terms of assembly, homo- and heterotetramers. Phosphofructokinase (PFK) enzyme functions as a tetramer composed of different combinations of 3 types of subunits, called PFKM (M), PFKL (L) and PFKP (P). The composition of the PFK tetramer differs according to the tissue type it is present in. The kinetic and regulatory properties of the tetrameric enzyme are dependent on the subunit composition, hence can vary across tissues. Interacts (via C-terminus) with HK1 (via N-terminal spermatogenic cell-specific region). Mg(2+) is required as a cofactor. GlcNAcylation decreases enzyme activity.

The protein localises to the cytoplasm. The enzyme catalyses beta-D-fructose 6-phosphate + ATP = beta-D-fructose 1,6-bisphosphate + ADP + H(+). It participates in carbohydrate degradation; glycolysis; D-glyceraldehyde 3-phosphate and glycerone phosphate from D-glucose: step 3/4. Allosterically activated by ADP, AMP, or fructose 2,6-bisphosphate, and allosterically inhibited by ATP or citrate. In terms of biological role, catalyzes the phosphorylation of D-fructose 6-phosphate to fructose 1,6-bisphosphate by ATP, the first committing step of glycolysis. This chain is ATP-dependent 6-phosphofructokinase, muscle type (PFKM), found in Equus caballus (Horse).